Reading from the N-terminus, the 332-residue chain is Endonuclease 8-like 2 (332 aa).

Catalysis depends on proline 2, which acts as the Schiff-base intermediate with DNA. Glutamate 3 functions as the Proton donor in the catalytic mechanism. Lysine 50 serves as the catalytic Proton donor; for beta-elimination activity. Lysine 50 is modified (N6-acetyllysine). The segment at 59–121 is disordered; sequence DEEMGPPGSS…EDDSEYLERD (63 aa). Serine 68 is subject to Phosphoserine. Over residues 74 to 84 the composition is skewed to basic and acidic residues; sequence PQKEVQKEGAA. The segment covering 94-104 has biased composition (polar residues); it reads GQKTLDGSSRS. Lysine 154 carries the N6-acetyllysine modification. Asparagine 231 contacts DNA. The FPG-type zinc-finger motif lies at 284 to 320; that stretch reads QVYQKEQCPAGHQVMKEAFGPEDGLQRLTWWCPQCQP. Catalysis depends on arginine 310, which acts as the Proton donor; for delta-elimination activity.

Belongs to the FPG family. Binds EP300. In terms of tissue distribution, detected in testis, skeletal muscle, heart, brain, placenta, lung, pancreas, kidney and liver.

The protein resides in the nucleus. It carries out the reaction 2'-deoxyribonucleotide-(2'-deoxyribose 5'-phosphate)-2'-deoxyribonucleotide-DNA = a 3'-end 2'-deoxyribonucleotide-(2,3-dehydro-2,3-deoxyribose 5'-phosphate)-DNA + a 5'-end 5'-phospho-2'-deoxyribonucleoside-DNA + H(+). Its activity is regulated as follows. Acetylation of Lys-50 leads to loss of DNA nicking activity. Acetylation of Lys-154 has no effect. In terms of biological role, involved in base excision repair of DNA damaged by oxidation or by mutagenic agents. Has DNA glycosylase activity towards 5-hydroxyuracil and other oxidized derivatives of cytosine with a preference for mismatched double-stranded DNA (DNA bubbles). Has low or no DNA glycosylase activity towards thymine glycol, 2-hydroxyadenine, hypoxanthine and 8-oxoguanine. Has AP (apurinic/apyrimidinic) lyase activity and introduces nicks in the DNA strand. Cleaves the DNA backbone by beta-delta elimination to generate a single-strand break at the site of the removed base with both 3'- and 5'-phosphates. This Homo sapiens (Human) protein is Endonuclease 8-like 2 (NEIL2).